A 542-amino-acid polypeptide reads, in one-letter code: 2,3-bisphosphoglycerate-independent phosphoglycerate mutase (542 aa).

Residues D24 and S74 each contribute to the Mn(2+) site. S74 (phosphoserine intermediate) is an active-site residue. Substrate-binding positions include H135, 165–166, R197, R203, 268–271, and K341; these read RD and RPDR. Residues D408, H412, D449, H450, and H467 each contribute to the Mn(2+) site.

The protein belongs to the BPG-independent phosphoglycerate mutase family. As to quaternary structure, monomer. Mn(2+) is required as a cofactor.

It catalyses the reaction (2R)-2-phosphoglycerate = (2R)-3-phosphoglycerate. It functions in the pathway carbohydrate degradation; glycolysis; pyruvate from D-glyceraldehyde 3-phosphate: step 3/5. In terms of biological role, catalyzes the interconversion of 2-phosphoglycerate and 3-phosphoglycerate. The protein is 2,3-bisphosphoglycerate-independent phosphoglycerate mutase of Prochlorococcus marinus (strain NATL1A).